The following is a 428-amino-acid chain: Glucose-1-phosphate adenylyltransferase (428 aa).

Alpha-D-glucose 1-phosphate contacts are provided by residues Y114, G179, 194 to 195 (EK), and S212.

It belongs to the bacterial/plant glucose-1-phosphate adenylyltransferase family. Homotetramer.

It carries out the reaction alpha-D-glucose 1-phosphate + ATP + H(+) = ADP-alpha-D-glucose + diphosphate. It functions in the pathway glycan biosynthesis; glycogen biosynthesis. Functionally, involved in the biosynthesis of ADP-glucose, a building block required for the elongation reactions to produce glycogen. Catalyzes the reaction between ATP and alpha-D-glucose 1-phosphate (G1P) to produce pyrophosphate and ADP-Glc. This is Glucose-1-phosphate adenylyltransferase from Yersinia pseudotuberculosis serotype IB (strain PB1/+).